The primary structure comprises 136 residues: Ribosome-binding factor A (136 aa).

The protein belongs to the RbfA family. In terms of assembly, monomer. Binds 30S ribosomal subunits, but not 50S ribosomal subunits or 70S ribosomes.

Its subcellular location is the cytoplasm. In terms of biological role, one of several proteins that assist in the late maturation steps of the functional core of the 30S ribosomal subunit. Associates with free 30S ribosomal subunits (but not with 30S subunits that are part of 70S ribosomes or polysomes). Required for efficient processing of 16S rRNA. May interact with the 5'-terminal helix region of 16S rRNA. The polypeptide is Ribosome-binding factor A (Rhodopseudomonas palustris (strain BisB5)).